The chain runs to 284 residues: Tropomyosin (284 aa).

N-acetylmethionine is present on Met-1. The tract at residues 1-42 (MDAIKKKMQAMKLEKDNAMDRADTLEQQNKEANNRAEKSEEE) is disordered. Residues 1–284 (MDAIKKKMQA…DQTFSELSGY (284 aa)) adopt a coiled-coil conformation. Over residues 12–38 (KLEKDNAMDRADTLEQQNKEANNRAEK) the composition is skewed to basic and acidic residues.

Belongs to the tropomyosin family. In terms of assembly, homodimer.

Tropomyosin, in association with the troponin complex, plays a central role in the calcium dependent regulation of muscle contraction. This Pandalus borealis (Northern red shrimp) protein is Tropomyosin.